The sequence spans 358 residues: tRNA-specific 2-thiouridylase MnmA (358 aa).

ATP contacts are provided by residues 6–13 (ALSGGVDS) and M32. The active-site Nucleophile is C103. C103 and C201 are joined by a disulfide. G127 contacts ATP. The interval 151-153 (KDQ) is interaction with tRNA. C201 functions as the Cysteine persulfide intermediate in the catalytic mechanism.

It belongs to the MnmA/TRMU family.

It is found in the cytoplasm. The enzyme catalyses S-sulfanyl-L-cysteinyl-[protein] + uridine(34) in tRNA + AH2 + ATP = 2-thiouridine(34) in tRNA + L-cysteinyl-[protein] + A + AMP + diphosphate + H(+). In terms of biological role, catalyzes the 2-thiolation of uridine at the wobble position (U34) of tRNA, leading to the formation of s(2)U34. In Thermotoga sp. (strain RQ2), this protein is tRNA-specific 2-thiouridylase MnmA.